The primary structure comprises 85 residues: uncharacterized protein (85 aa).

2 helical membrane passes run 20–42 and 52–69; these read IYWFFCLYYKDGPILYTIYTTFL and IILRNTVAFLSFMYKHYY.

It is found in the membrane. This is an uncharacterized protein from Saccharomyces cerevisiae (strain ATCC 204508 / S288c) (Baker's yeast).